The chain runs to 214 residues: Outer-membrane lipoprotein carrier protein (214 aa).

An N-terminal signal peptide occupies residues 1–24 (MKIKLAFAVLLALCLSLSVMPVLA).

The protein belongs to the LolA family. In terms of assembly, monomer.

Its subcellular location is the periplasm. Its function is as follows. Participates in the translocation of lipoproteins from the inner membrane to the outer membrane. Only forms a complex with a lipoprotein if the residue after the N-terminal Cys is not an aspartate (The Asp acts as a targeting signal to indicate that the lipoprotein should stay in the inner membrane). The protein is Outer-membrane lipoprotein carrier protein of Alkalilimnicola ehrlichii (strain ATCC BAA-1101 / DSM 17681 / MLHE-1).